The following is a 308-amino-acid chain: Ribosomal RNA small subunit methyltransferase H (308 aa).

Residues Gly-36–His-38, Asp-55, Phe-86, Asp-103, and Gln-110 each bind S-adenosyl-L-methionine.

This sequence belongs to the methyltransferase superfamily. RsmH family.

The protein resides in the cytoplasm. The enzyme catalyses cytidine(1402) in 16S rRNA + S-adenosyl-L-methionine = N(4)-methylcytidine(1402) in 16S rRNA + S-adenosyl-L-homocysteine + H(+). Its function is as follows. Specifically methylates the N4 position of cytidine in position 1402 (C1402) of 16S rRNA. This Helicobacter pylori (strain Shi470) protein is Ribosomal RNA small subunit methyltransferase H.